Consider the following 447-residue polypeptide: Growth/differentiation factor 7 (447 aa).

A signal peptide spans 1-19 (MDLSAAAALCLWLLSACRP). Positions 20–318 (RDGLEAAAVL…AVTAGRRRRR (299 aa)) are excised as a propeptide. Asn80 carries an N-linked (GlcNAc...) asparagine glycan. Positions 292 to 346 (LAAQPPPDPGTGTGSPRAVTAGRRRRRTALAGTRTAQGSGGGAGRGHGRRGRSRC) are disordered. The segment covering 337–346 (GHGRRGRSRC) has biased composition (basic residues). 3 disulfides stabilise this stretch: Cys346–Cys412, Cys375–Cys444, and Cys379–Cys446.

This sequence belongs to the TGF-beta family. As to quaternary structure, homodimer; disulfide-linked. Highly expressed in the primary aera of brain neocortex.

The protein localises to the secreted. May play an active role in the motor area of the primate neocortex. The sequence is that of Growth/differentiation factor 7 (GDF7) from Chlorocebus aethiops (Green monkey).